The following is a 500-amino-acid chain: Zinc finger protein ENHYDROUS (500 aa).

A disordered region spans residues Met-1–Asp-42. The segment covering Ser-8–Gly-21 has biased composition (low complexity). Position 51 is a phosphoserine (Ser-51). 2 C2H2-type zinc fingers span residues Phe-61–His-83 and Tyr-102–His-132. The short motif at Ile-124 to Lys-131 is the Nuclear localization signal element. Residues Trp-137–Gly-160 form a C2H2-type 2; degenerate zinc finger. Residues Cys-139, Cys-142, His-155, Cys-159, Cys-166, Cys-168, His-181, and Cys-185 each coordinate Zn(2+). The CCHC-type 2; atypical zinc-finger motif lies at Tyr-164 to Ala-187. Residues Arg-174 to Asp-186 are SHR-binding. Residues His-196 to Val-236 are disordered. Basic and acidic residues predominate over residues Val-207–Gln-216.

Interacts with the DELLA proteins (e.g. GAI/RGA2, RGA, RGL1, RGL2 and RGLG3), acting as coactivators. At 3 days post anthesis (DPA), expressed in the chalazal endosperm region. By 6 DPA, expressed in the endosperm and embryo. In fully germinated seed, strongest expression in the root tip and not detected in the cotyledons. In 4-days old seedlings, restricted to the vasculature of the cotyledons, the shoot apical meristem region, and the root tip. By 8 days, restricted to newly emerged leaves.

The protein localises to the nucleus. Functionally, transcription factor promoting the transition to germination by regulating light and hormonal signaling during seed maturation. Acts as a positive regulator of phytochrome and/or gibberellin action. In Arabidopsis thaliana (Mouse-ear cress), this protein is Zinc finger protein ENHYDROUS.